The sequence spans 257 residues: Zinc transporter ZupT (257 aa).

8 helical membrane passes run Leu-5–Gly-25, Val-32–Met-52, Gly-61–Leu-81, Ala-109–Val-129, Leu-137–Ala-157, Ile-171–Ile-191, Leu-195–Leu-215, and Gly-236–Ile-256. Asn-120 and Glu-123 together coordinate Fe(2+). 2 residues coordinate Zn(2+): Glu-123 and His-148. Fe(2+)-binding residues include Asn-149, Glu-152, and Glu-181. Position 152 (Glu-152) interacts with Zn(2+).

Belongs to the ZIP transporter (TC 2.A.5) family. ZupT subfamily.

The protein localises to the cell inner membrane. The catalysed reaction is Zn(2+)(in) = Zn(2+)(out). In terms of biological role, mediates zinc uptake. May also transport other divalent cations. The chain is Zinc transporter ZupT from Salmonella heidelberg (strain SL476).